A 273-amino-acid chain; its full sequence is Putative phosphoenolpyruvate synthase regulatory protein (273 aa).

153–160 is an ADP binding site; sequence GVSRCGKT.

This sequence belongs to the pyruvate, phosphate/water dikinase regulatory protein family. PSRP subfamily.

It carries out the reaction [pyruvate, water dikinase] + ADP = [pyruvate, water dikinase]-phosphate + AMP + H(+). The enzyme catalyses [pyruvate, water dikinase]-phosphate + phosphate + H(+) = [pyruvate, water dikinase] + diphosphate. In terms of biological role, bifunctional serine/threonine kinase and phosphorylase involved in the regulation of the phosphoenolpyruvate synthase (PEPS) by catalyzing its phosphorylation/dephosphorylation. This Yersinia pseudotuberculosis serotype I (strain IP32953) protein is Putative phosphoenolpyruvate synthase regulatory protein.